A 121-amino-acid polypeptide reads, in one-letter code: Dihydroneopterin aldolase (121 aa).

Substrate is bound by residues glutamate 22, tyrosine 54, and 73–74 (LE). The active-site Proton donor/acceptor is lysine 100.

It belongs to the DHNA family. In terms of assembly, homooctamer. Four molecules assemble into a ring, and two rings come together to give a cylinder with a hole of at least 13 a diameter.

The catalysed reaction is 7,8-dihydroneopterin = 6-hydroxymethyl-7,8-dihydropterin + glycolaldehyde. It carries out the reaction 7,8-dihydroneopterin = 7,8-dihydromonapterin. Its pathway is cofactor biosynthesis; tetrahydrofolate biosynthesis; 2-amino-4-hydroxy-6-hydroxymethyl-7,8-dihydropteridine diphosphate from 7,8-dihydroneopterin triphosphate: step 3/4. Catalyzes the conversion of 7,8-dihydroneopterin to 6-hydroxymethyl-7,8-dihydropterin. Can also catalyze the epimerization of carbon 2' of dihydroneopterin to dihydromonapterin. The sequence is that of Dihydroneopterin aldolase (folB) from Staphylococcus aureus (strain COL).